The sequence spans 156 residues: Transcription antitermination protein NusB (156 aa).

It belongs to the NusB family.

Functionally, involved in transcription antitermination. Required for transcription of ribosomal RNA (rRNA) genes. Binds specifically to the boxA antiterminator sequence of the ribosomal RNA (rrn) operons. This Bartonella quintana (strain Toulouse) (Rochalimaea quintana) protein is Transcription antitermination protein NusB.